The chain runs to 515 residues: Fatty acyl-CoA reductase 2 (515 aa).

Residues methionine 1–asparagine 465 are Cytoplasmic-facing. The helical transmembrane segment at isoleucine 466–alanine 484 threads the bilayer. Residues arginine 485–valine 515 are Peroxisomal-facing.

The protein belongs to the fatty acyl-CoA reductase family.

It is found in the peroxisome membrane. The catalysed reaction is a long-chain fatty acyl-CoA + 2 NADPH + 2 H(+) = a long-chain primary fatty alcohol + 2 NADP(+) + CoA. The enzyme catalyses hexadecanoyl-CoA + 2 NADPH + 2 H(+) = hexadecan-1-ol + 2 NADP(+) + CoA. It carries out the reaction octadecanoyl-CoA + 2 NADPH + 2 H(+) = octadecan-1-ol + 2 NADP(+) + CoA. It catalyses the reaction a very long-chain fatty acyl-CoA + 2 NADPH + 2 H(+) = a very long-chain primary fatty alcohol + 2 NADP(+) + CoA. The catalysed reaction is an ultra-long-chain fatty acyl-CoA + 2 NADPH + 2 H(+) = an ultra long-chain primary fatty alcohol + 2 NADP(+) + CoA. The enzyme catalyses eicosanoyl-CoA + 2 NADPH + 2 H(+) = eicosan-1-ol + 2 NADP(+) + CoA. It carries out the reaction docosanoyl-CoA + 2 NADPH + 2 H(+) = docosan-1-ol + 2 NADP(+) + CoA. It catalyses the reaction tetracosanoyl-CoA + 2 NADPH + 2 H(+) = tetracosan-1-ol + 2 NADP(+) + CoA. The catalysed reaction is hexacosanoyl-CoA + 2 NADPH + 2 H(+) = hexacosan-1-ol + 2 NADP(+) + CoA. The enzyme catalyses octacosanoyl-CoA + 2 NADPH + 2 H(+) = octacosan-1-ol + 2 NADP(+) + CoA. It carries out the reaction triacontanoyl-CoA + 2 NADPH + 2 H(+) = triacontan-1-ol + 2 NADP(+) + CoA. It catalyses the reaction 18-methylnonadecanoyl-CoA + 2 NADPH + 2 H(+) = 18-methylnonadecan-1-ol + 2 NADP(+) + CoA. The catalysed reaction is 20-methylheneicosanoyl-CoA + 2 NADPH + 2 H(+) = 20-methylheneicosan-1-ol + 2 NADP(+) + CoA. The enzyme catalyses 22-methyltricosanoyl-CoA + 2 NADPH + 2 H(+) = 22-methyltricosan-1-ol + 2 NADP(+) + CoA. It carries out the reaction 24-methylpentacosanoyl-CoA + 2 NADPH + 2 H(+) = 24-methylpentacosan-1-ol + 2 NADP(+) + CoA. Its function is as follows. Catalyzes the reduction of saturated but not unsaturated C16 or C18 fatty acyl-CoA to fatty alcohols (FAls). A lower activity can be observed with shorter fatty acyl-CoA substrates. Can produce very long-chain and ultra long-chain FAls, regardless of whether they have a straight or branched chain. Involved in the production of ether lipids/plasmalogens and wax monoesters whose synthesis requires FAls as substrates. In Bos taurus (Bovine), this protein is Fatty acyl-CoA reductase 2.